A 230-amino-acid chain; its full sequence is Large ribosomal subunit protein uL1c (230 aa).

This sequence belongs to the universal ribosomal protein uL1 family. In terms of assembly, part of the 50S ribosomal subunit.

The protein resides in the plastid. It is found in the chloroplast. Binds directly to 23S rRNA. Might be involved in E site tRNA release (Potential). In Trieres chinensis (Marine centric diatom), this protein is Large ribosomal subunit protein uL1c (rpl1).